The sequence spans 60 residues: Metallothionein (60 aa).

The interval 1–28 (MDPCDCSKTGKCNCGGSCTCTNCSCTSC) is beta. 20 residues coordinate a divalent metal cation: Cys4, Cys6, Cys12, Cys14, Cys18, Cys20, Cys23, Cys25, Cys28, Cys32, Cys33, Cys35, Cys36, Cys40, Cys43, Cys47, Cys49, Cys54, Cys58, and Cys59. The segment at 29-60 (KKSCCACCPSGCTKCASGCVCKGKTCDTTCCQ) is alpha.

Belongs to the metallothionein superfamily. Type 1 family.

In terms of biological role, metallothioneins have a high content of cysteine residues that bind various heavy metals. The protein is Metallothionein (mt) of Oryzias latipes (Japanese rice fish).